The sequence spans 709 residues: Protein IMPAIRED IN BABA-INDUCED STERILITY 1 (709 aa).

G2 is lipidated: N-myristoyl glycine. Positions 53-80 (SGKKSSSKKSGSELGSDFGELSESGRAS) are disordered. One can recognise a Protein kinase domain in the interval 131 to 418 (FEKLEKIGQG…ASTALVSQYF (288 aa)). Residues 137–145 (IGQGTYSSV) and K160 contribute to the ATP site. D255 functions as the Proton acceptor in the catalytic mechanism. Disordered stretches follow at residues 434-536 (SPSK…PFSG) and 566-609 (SRGH…QDRE). Residues 437-449 (KEIDAKHREDTTR) show a composition bias toward basic and acidic residues. Residues 484–494 (HSQKFQKRNGH) are compositionally biased toward basic residues. Polar residues predominate over residues 495–505 (SVHNSIDSDST). 2 stretches are compositionally biased toward basic and acidic residues: residues 509–523 (KMQK…EASH) and 586–609 (VDSK…QDRE).

The protein belongs to the protein kinase superfamily. Ser/Thr protein kinase family.

Functionally, required for beta-aminobutyric acid (BABA)-induced resistance (BABA-IR) against bacteria (e.g. P.syringae) and oomycetes (e.g. H.parasitica) via priming for salicylate (SA)-dependent defense responses such as pathogenesis-related PR-1 gene expression and trailing necrosis. Involved in BABA-mediated sterility. Necessary for the inheritance of BABA-priming to next generation, especially for the primed to be primed phenotype which consists in an enhanced second BABA-priming in transgenerationally primed plants. This Arabidopsis thaliana (Mouse-ear cress) protein is Protein IMPAIRED IN BABA-INDUCED STERILITY 1.